Here is a 244-residue protein sequence, read N- to C-terminus: Phosphonates import ATP-binding protein PhnC 2 (244 aa).

One can recognise an ABC transporter domain in the interval 6–244 (IECHNLETAY…LQAQFVVNNQ (239 aa)). Residue 41–48 (GLNGAGKS) coordinates ATP.

Belongs to the ABC transporter superfamily. Phosphonates importer (TC 3.A.1.9.1) family. The complex is composed of two ATP-binding proteins (PhnC), two transmembrane proteins (PhnE) and a solute-binding protein (PhnD).

It localises to the cell inner membrane. It catalyses the reaction phosphonate(out) + ATP + H2O = phosphonate(in) + ADP + phosphate + H(+). In terms of biological role, part of the ABC transporter complex PhnCDE involved in phosphonates import. Responsible for energy coupling to the transport system. The sequence is that of Phosphonates import ATP-binding protein PhnC 2 from Nostoc sp. (strain PCC 7120 / SAG 25.82 / UTEX 2576).